We begin with the raw amino-acid sequence, 172 residues long: Adenine phosphoribosyltransferase (172 aa).

The protein belongs to the purine/pyrimidine phosphoribosyltransferase family. In terms of assembly, homodimer.

It is found in the cytoplasm. The enzyme catalyses AMP + diphosphate = 5-phospho-alpha-D-ribose 1-diphosphate + adenine. Its pathway is purine metabolism; AMP biosynthesis via salvage pathway; AMP from adenine: step 1/1. Its function is as follows. Catalyzes a salvage reaction resulting in the formation of AMP, that is energically less costly than de novo synthesis. The chain is Adenine phosphoribosyltransferase from Prochlorococcus marinus (strain NATL2A).